The sequence spans 379 residues: Alanine racemase (379 aa).

The active-site Proton acceptor; specific for D-alanine is Lys-35. Lys-35 carries the post-translational modification N6-(pyridoxal phosphate)lysine. Arg-133 is a substrate binding site. Tyr-265 functions as the Proton acceptor; specific for L-alanine in the catalytic mechanism. Met-312 serves as a coordination point for substrate.

It belongs to the alanine racemase family. The cofactor is pyridoxal 5'-phosphate.

It carries out the reaction L-alanine = D-alanine. It functions in the pathway amino-acid biosynthesis; D-alanine biosynthesis; D-alanine from L-alanine: step 1/1. Functionally, catalyzes the interconversion of L-alanine and D-alanine. May also act on other amino acids. The sequence is that of Alanine racemase (alr) from Treponema denticola (strain ATCC 35405 / DSM 14222 / CIP 103919 / JCM 8153 / KCTC 15104).